A 587-amino-acid polypeptide reads, in one-letter code: Phosphomethylpyrimidine synthase (587 aa).

Residues Asn218, Met247, Tyr276, His312, 332 to 334 (SRG), 373 to 376 (DGLR), and Glu412 contribute to the substrate site. His416 lines the Zn(2+) pocket. Tyr439 lines the substrate pocket. His480 lines the Zn(2+) pocket. Residues Cys560, Cys563, and Cys568 each coordinate [4Fe-4S] cluster.

The protein belongs to the ThiC family. Requires [4Fe-4S] cluster as cofactor.

The catalysed reaction is 5-amino-1-(5-phospho-beta-D-ribosyl)imidazole + S-adenosyl-L-methionine = 4-amino-2-methyl-5-(phosphooxymethyl)pyrimidine + CO + 5'-deoxyadenosine + formate + L-methionine + 3 H(+). It participates in cofactor biosynthesis; thiamine diphosphate biosynthesis. Its function is as follows. Catalyzes the synthesis of the hydroxymethylpyrimidine phosphate (HMP-P) moiety of thiamine from aminoimidazole ribotide (AIR) in a radical S-adenosyl-L-methionine (SAM)-dependent reaction. In Porphyromonas gingivalis (strain ATCC BAA-308 / W83), this protein is Phosphomethylpyrimidine synthase.